The chain runs to 435 residues: S-phase entry cyclin-5 (435 aa).

2 disordered regions span residues 36-70 (KRAL…NPLS) and 104-126 (NDRT…DAAS). Residues 41–52 (KNDSSSKQQVQD) are compositionally biased toward low complexity. Over residues 110 to 124 (EQEEEEEEEGEDDDA) the composition is skewed to acidic residues.

It belongs to the cyclin family. Cyclin AB subfamily.

Required for efficient progression through S phase and possibly for the normal progression through meiosis. Interacts with CDC28. The polypeptide is S-phase entry cyclin-5 (CLB5) (Saccharomyces cerevisiae (strain ATCC 204508 / S288c) (Baker's yeast)).